The primary structure comprises 164 residues: Protein LIGHT-DEPENDENT SHORT HYPOCOTYLS 8 (164 aa).

The ALOG domain occupies 23 to 150; the sequence is RYESQKSRDW…ARGVLYKKKK (128 aa). A Nuclear localization signal motif is present at residues 148 to 152; that stretch reads KKKRL.

The protein belongs to the plant homeotic and developmental regulators ALOG protein family.

The protein resides in the nucleus. Probable transcription regulator that acts as a developmental regulator by promoting cell growth in response to light. This Arabidopsis thaliana (Mouse-ear cress) protein is Protein LIGHT-DEPENDENT SHORT HYPOCOTYLS 8 (LSH8).